The chain runs to 387 residues: ADP,ATP carrier protein 2, mitochondrial (387 aa).

The transit peptide at 1–77 (MADQANQPTV…PVMPTPLFAN (77 aa)) directs the protein to the mitochondrion. Solcar repeat units follow at residues 85-178 (KNFM…FKRL), 190-282 (KWFA…IKPV), and 290-376 (DNFF…LQIL). The next 5 membrane-spanning stretches (helical) occupy residues 87–114 (FMIDFMMGGVSAAVSKTAAAPIERVKLL), 155–179 (TANVIRYFPTQALNFAFKDYFKRLF), 188–208 (YWKWFAGNLASGGAAGASSLF), 258–279 (FNISCVGIIVYRGLYFGLYDSI), and 293–313 (FASFALGWLITNGAGLASYPI). The ADP site is built by Arg160 and Lys172. Position 317 (Arg317) interacts with ADP. Positions 317–322 (RRRMMM) are important for transport activity. Residues 317–322 (RRRMMM) carry the Nucleotide carrier signature motif motif. Residues 353–373 (AGANILRAIAGAGVLSGYDQL) form a helical membrane-spanning segment.

This sequence belongs to the mitochondrial carrier (TC 2.A.29) family. Monomer.

The protein resides in the mitochondrion inner membrane. It carries out the reaction ADP(in) + ATP(out) = ADP(out) + ATP(in). With respect to regulation, the matrix-open state (m-state) is inhibited by the membrane-permeable bongkrekic acid (BKA). The cytoplasmic-open state (c-state) is inhibited by the membrane-impermeable toxic inhibitor carboxyatractyloside (CATR). In terms of biological role, ADP:ATP antiporter that mediates import of ADP into the mitochondrial matrix for ATP synthesis, and export of ATP out to fuel the cell. Cycles between the cytoplasmic-open state (c-state) and the matrix-open state (m-state): operates by the alternating access mechanism with a single substrate-binding site intermittently exposed to either the cytosolic (c-state) or matrix (m-state) side of the inner mitochondrial membrane. The chain is ADP,ATP carrier protein 2, mitochondrial (ANT2) from Zea mays (Maize).